A 395-amino-acid polypeptide reads, in one-letter code: Dual specificity protein phosphatase 4 (395 aa).

An N-acetylvaline modification is found at V2. The 119-residue stretch at 42–160 (SGGKCLLLDC…FSSEYPEFCS (119 aa)) folds into the Rhodanese domain. Positions 196-337 (GPVEILPFLY…LLQFESQVLT (142 aa)) constitute a Tyrosine-protein phosphatase domain. Catalysis depends on C281, which acts as the Phosphocysteine intermediate. Phosphoserine; by MAPK is present on residues S387 and S392.

It belongs to the protein-tyrosine phosphatase family. Non-receptor class dual specificity subfamily. Hollow spherical complex composed of 24 subunits with pseudooctahedral symmetry, has a tetramer as the basic unit. Post-translationally, phosphorylation in the C-terminus by ERK1/2 inhibits proteasomal degradation and stabilizes the protein. As to expression, expressed at moderate levels in nearly all tissues and cells including brain, spleen, and testes with the higher expression in the heart and lung and lower expression in skeletal muscle and kidney. Undetectable in liver. Expressed in many areas of the brain with very strong expression in the hippocampus, piriform cortex, and the suprachiasmatic nucleus.

Its subcellular location is the nucleus. The catalysed reaction is O-phospho-L-tyrosyl-[protein] + H2O = L-tyrosyl-[protein] + phosphate. It carries out the reaction O-phospho-L-seryl-[protein] + H2O = L-seryl-[protein] + phosphate. It catalyses the reaction O-phospho-L-threonyl-[protein] + H2O = L-threonyl-[protein] + phosphate. Its function is as follows. Regulates mitogenic signal transduction by dephosphorylating both Thr and Tyr residues on MAP kinases ERK1 and ERK2. The protein is Dual specificity protein phosphatase 4 (Dusp4) of Rattus norvegicus (Rat).